Reading from the N-terminus, the 170-residue chain is Arginine repressor (170 aa).

The protein belongs to the ArgR family.

The protein localises to the cytoplasm. It participates in amino-acid biosynthesis; L-arginine biosynthesis [regulation]. Regulates arginine biosynthesis genes. The sequence is that of Arginine repressor from Mycobacterium tuberculosis (strain ATCC 25177 / H37Ra).